The primary structure comprises 234 residues: Sugar fermentation stimulation protein A (234 aa).

The H-T-H motif DNA-binding region spans 201 to 220 (LLSEAQQRGVEILAYKAEIS).

It belongs to the SfsA family.

Functionally, binds to DNA non-specifically. Could be a regulatory factor involved in maltose metabolism. This is Sugar fermentation stimulation protein A from Escherichia coli (strain 55989 / EAEC).